Here is a 600-residue protein sequence, read N- to C-terminus: Translation initiation factor IF-2 (600 aa).

One can recognise a tr-type G domain in the interval 112 to 279 (ERAPIITVMG…AINLQAEILE (168 aa)). The segment at 121–128 (GHVDHGKT) is G1. 121–128 (GHVDHGKT) is a GTP binding site. The interval 146–150 (GITQH) is G2. The tract at residues 167–170 (DTPG) is G3. GTP is bound by residues 167 to 171 (DTPGH) and 221 to 224 (NKMD). The interval 221–224 (NKMD) is G4. The tract at residues 257-259 (SAL) is G5.

Belongs to the TRAFAC class translation factor GTPase superfamily. Classic translation factor GTPase family. IF-2 subfamily.

Its subcellular location is the cytoplasm. Functionally, one of the essential components for the initiation of protein synthesis. Protects formylmethionyl-tRNA from spontaneous hydrolysis and promotes its binding to the 30S ribosomal subunits. Also involved in the hydrolysis of GTP during the formation of the 70S ribosomal complex. The chain is Translation initiation factor IF-2 from Mycoplasma mobile (strain ATCC 43663 / 163K / NCTC 11711) (Mesomycoplasma mobile).